A 129-amino-acid chain; its full sequence is D-ribose pyranase (129 aa).

Catalysis depends on histidine 20, which acts as the Proton donor. Substrate-binding positions include aspartate 28, histidine 96, and 118 to 120 (YAN).

Belongs to the RbsD / FucU family. RbsD subfamily. In terms of assembly, homodecamer.

It localises to the cytoplasm. It carries out the reaction beta-D-ribopyranose = beta-D-ribofuranose. It participates in carbohydrate metabolism; D-ribose degradation; D-ribose 5-phosphate from beta-D-ribopyranose: step 1/2. Catalyzes the interconversion of beta-pyran and beta-furan forms of D-ribose. The polypeptide is D-ribose pyranase (Exiguobacterium sp. (strain ATCC BAA-1283 / AT1b)).